Consider the following 589-residue polypeptide: Isocitrate dehydrogenase kinase/phosphatase (589 aa).

Residues 322 to 328 and lysine 343 each bind ATP; that span reads APGIRGL. Aspartate 378 is a catalytic residue.

This sequence belongs to the AceK family.

It is found in the cytoplasm. It catalyses the reaction L-seryl-[isocitrate dehydrogenase] + ATP = O-phospho-L-seryl-[isocitrate dehydrogenase] + ADP + H(+). Its function is as follows. Bifunctional enzyme which can phosphorylate or dephosphorylate isocitrate dehydrogenase (IDH) on a specific serine residue. This is a regulatory mechanism which enables bacteria to bypass the Krebs cycle via the glyoxylate shunt in response to the source of carbon. When bacteria are grown on glucose, IDH is fully active and unphosphorylated, but when grown on acetate or ethanol, the activity of IDH declines drastically concomitant with its phosphorylation. The chain is Isocitrate dehydrogenase kinase/phosphatase from Azoarcus sp. (strain BH72).